The following is a 139-amino-acid chain: Small ribosomal subunit protein uS12 (139 aa).

Asp102 carries the 3-methylthioaspartic acid modification.

Belongs to the universal ribosomal protein uS12 family. As to quaternary structure, part of the 30S ribosomal subunit. Contacts proteins S8 and S17. May interact with IF1 in the 30S initiation complex.

Its function is as follows. With S4 and S5 plays an important role in translational accuracy. In terms of biological role, interacts with and stabilizes bases of the 16S rRNA that are involved in tRNA selection in the A site and with the mRNA backbone. Located at the interface of the 30S and 50S subunits, it traverses the body of the 30S subunit contacting proteins on the other side and probably holding the rRNA structure together. The combined cluster of proteins S8, S12 and S17 appears to hold together the shoulder and platform of the 30S subunit. The chain is Small ribosomal subunit protein uS12 from Mycoplasma capricolum subsp. capricolum (strain California kid / ATCC 27343 / NCTC 10154).